Here is a 104-residue protein sequence, read N- to C-terminus: uncharacterized protein (104 aa).

Residues 51–70 form a disordered region; that stretch reads NPGRSLDNNKDVSDKGRSEF. The span at 57–70 shows a compositional bias: basic and acidic residues; that stretch reads DNNKDVSDKGRSEF.

It belongs to the protein-tyrosine phosphatase family.

This is an uncharacterized protein from Xanthomonas campestris pv. campestris (strain ATCC 33913 / DSM 3586 / NCPPB 528 / LMG 568 / P 25).